A 332-amino-acid polypeptide reads, in one-letter code: Galactinol synthase 7 (332 aa).

Residue Lys-101 is part of the active site. 3 residues coordinate Mn(2+): Asp-117, Asp-119, and His-255.

This sequence belongs to the glycosyltransferase 8 family. Galactosyltransferase subfamily. A divalent metal cation serves as cofactor.

The protein localises to the cytoplasm. The enzyme catalyses myo-inositol + UDP-alpha-D-galactose = alpha-D-galactosyl-(1-&gt;3)-1D-myo-inositol + UDP + H(+). Its function is as follows. Galactinol synthase involved in the biosynthesis of raffinose family oligosaccharides (RFOs) that function as osmoprotectants. May promote plant stress tolerance. The chain is Galactinol synthase 7 (GOLS7) from Arabidopsis thaliana (Mouse-ear cress).